The chain runs to 442 residues: Asparagine--tRNA ligase (442 aa).

The protein belongs to the class-II aminoacyl-tRNA synthetase family. As to quaternary structure, homodimer.

Its subcellular location is the cytoplasm. It carries out the reaction tRNA(Asn) + L-asparagine + ATP = L-asparaginyl-tRNA(Asn) + AMP + diphosphate + H(+). The polypeptide is Asparagine--tRNA ligase (Koribacter versatilis (strain Ellin345)).